The following is a 440-amino-acid chain: Suppressor of cytokine signaling 4 (440 aa).

The segment covering 1–10 (MAENNENISK) has biased composition (polar residues). The interval 1–29 (MAENNENISKNVDVRPKTSRSRSADRKDG) is disordered. The segment covering 12–29 (VDVRPKTSRSRSADRKDG) has biased composition (basic and acidic residues). Residues 286–381 (CYWGVMDKYA…FFEPLLSTPL (96 aa)) enclose the SH2 domain. Residues 376–425 (LLSTPLIRTFPFSLQHICRTVICNCTTYDGIDALPIPSSMKLYLKEYHYK) form the SOCS box domain.

Its pathway is protein modification; protein ubiquitination. Functionally, SOCS family proteins form part of a classical negative feedback system that regulates cytokine signal transduction. Substrate-recognition component of a SCF-like ECS (Elongin BC-CUL2/5-SOCS-box protein) E3 ubiquitin-protein ligase complex which mediates the ubiquitination and subsequent proteasomal degradation of target proteins. Inhibits EGF signaling by mediating the degradation of the Tyr-phosphorylated EGF receptor/EGFR. In Homo sapiens (Human), this protein is Suppressor of cytokine signaling 4 (SOCS4).